Here is a 3477-residue protein sequence, read N- to C-terminus: Abnormal spindle-like microcephaly-associated protein (3477 aa).

Residues Met-1–Glu-30 form a disordered region. A phosphoserine mark is found at Ser-280, Ser-283, Ser-367, and Ser-392. Residues Ile-308–Gln-409 form a sufficient for interaction with KATNA1:KATNB1 region. Polar residues predominate over residues Leu-415 to Gln-424. 2 disordered regions span residues Leu-415 to Gly-443 and Lys-559 to Met-581. A Phosphoserine modification is found at Ser-425. Residues Asn-560–Ser-570 show a composition bias toward polar residues. Ser-605 is modified (phosphoserine). The region spanning Lys-920–Gln-1056 is the Calponin-homology (CH) 1 domain. Positions Val-1057–Ser-1078 form a coiled coil. A Phosphoserine modification is found at Ser-1103. One can recognise a Calponin-homology (CH) 2 domain in the interval Ser-1110–Leu-1261. IQ domains follow at residues Gln-1347 to Gln-1378, Tyr-1393 to Ser-1422, Leu-1582 to Gln-1613, Thr-1632 to Lys-1661, Ile-1655 to Lys-1684, Met-1728 to Ser-1757, Gln-1751 to Gln-1782, Val-1801 to Lys-1830, Gln-1824 to Lys-1853, Thr-1874 to Lys-1903, Glu-1897 to Gln-1928, Leu-1947 to Gln-1978, Gln-1970 to Gln-2001, Thr-2020 to Thr-2049, Cys-2043 to Gln-2074, Leu-2093 to Lys-2124, Met-2116 to Gln-2147, Ile-2166 to Gln-2197, Met-2189 to Thr-2218, Leu-2239 to Gln-2270, Met-2262 to Gln-2293, Val-2311 to Gln-2342, Met-2334 to Gln-2365, Gln-2384 to Gln-2415, Met-2407 to Gln-2438, Leu-2457 to Gln-2488, Gln-2530 to Gln-2561, Gln-2624 to Ser-2653, Arg-2665 to Gln-2696, Met-2688 to Gln-2719, Val-2738 to Ala-2767, Gln-2859 to Gln-2890, Ile-2909 to Lys-2938, Ile-2932 to Ala-2963, Lys-2954 to Gln-2985, Arg-3029 to Gln-3060, Phe-3079 to His-3110, Arg-3181 to Lys-3210, and Phe-3204 to Ser-3235.

As to quaternary structure, interacts with KATNA1 and KATNB1; katanin complex formation KATNA1:KATNB1 is required for the association.

The protein localises to the cytoplasm. The protein resides in the cytoskeleton. It localises to the spindle. It is found in the nucleus. Functionally, involved in mitotic spindle regulation and coordination of mitotic processes. The function in regulating microtubule dynamics at spindle poles including spindle orientation, astral microtubule density and poleward microtubule flux seems to depend on the association with the katanin complex formed by KATNA1 and KATNB1. Enhances the microtubule lattice severing activity of KATNA1 by recruiting the katanin complex to microtubules. Can block microtubule minus-end growth and reversely this function can be enhanced by the katanin complex. May have a preferential role in regulating neurogenesis. The chain is Abnormal spindle-like microcephaly-associated protein (ASPM) from Homo sapiens (Human).